The following is a 277-amino-acid chain: Carbonyl reductase [NADPH] 1 (277 aa).

At S2 the chain carries N-acetylserine. Phosphoserine is present on residues S2 and S30. Residues V10 to V34, D63 to I64, and N90 each bind NADP(+). Glutathione-binding positions include F95 to V97 and Q106. S140 contributes to the substrate binding site. A193–Y194 is a glutathione binding site. The Proton acceptor role is filled by Y194. NADP(+) is bound by residues Y194–K198 and V231–T233. Position 239 is an N6-1-carboxyethyl lysine (K239). The interval P258–W277 is disordered.

This sequence belongs to the short-chain dehydrogenases/reductases (SDR) family. In terms of assembly, monomer.

It localises to the cytoplasm. It catalyses the reaction a secondary alcohol + NADP(+) = a ketone + NADPH + H(+). The catalysed reaction is prostaglandin F2alpha + NADP(+) = prostaglandin E2 + NADPH + H(+). The enzyme catalyses prostaglandin E1 + NADP(+) = 15-oxoprostaglandin E1 + NADPH + H(+). It carries out the reaction menadione + NADPH + H(+) = menadiol + NADP(+). It catalyses the reaction prostaglandin D2 + NADP(+) = 15-oxoprostaglandin D2 + NADPH + H(+). The catalysed reaction is prostaglandin E2 + NADP(+) = 15-oxoprostaglandin E2 + NADPH + H(+). The enzyme catalyses prostaglandin F2alpha + NADP(+) = 15-oxoprostaglandin F2alpha + NADPH + H(+). It carries out the reaction daunorubicin + NADPH + H(+) = 13-dihydrodaunorubicin + NADP(+). It catalyses the reaction S-nitrosoglutathione + NADPH + H(+) = S-(hydroxysulfenamide)glutathione + NADP(+). The catalysed reaction is corticosterone + NADPH + H(+) = 20beta-dihydrocorticosterone + NADP(+). The enzyme catalyses a primary alcohol + NADP(+) = an aldehyde + NADPH + H(+). It carries out the reaction cortisol + NADPH + H(+) = 20beta-dihydrocortisol + NADP(+). Functionally, NADPH-dependent reductase with broad substrate specificity. Catalyzes the reduction of a wide variety of carbonyl compounds including quinones, prostaglandins, menadione, plus various xenobiotics. Catalyzes the reduction of the antitumor anthracyclines doxorubicin and daunorubicin to the cardiotoxic compounds doxorubicinol and daunorubicinol. Can convert prostaglandin E to prostaglandin F2-alpha. Can bind glutathione, which explains its higher affinity for glutathione-conjugated substrates. Catalyzes the reduction of S-nitrosoglutathione. In addition, participates in the glucocorticoid metabolism by catalyzing the NADPH-dependent cortisol/corticosterone into 20beta-dihydrocortisol (20b-DHF) or 20beta-corticosterone (20b-DHB), which are weak agonists of NR3C1 and NR3C2 in adipose tissue. In Mus musculus (Mouse), this protein is Carbonyl reductase [NADPH] 1.